The following is a 918-amino-acid chain: Serine/threonine-protein kinase D1 (918 aa).

Tyrosine 93 carries the phosphotyrosine modification. A Phorbol-ester/DAG-type 1 zinc finger spans residues 144–194 (PHALFVHSYRAPAFCDHCGEMLWGLVRQGLKCEGCGLNYHKRCAFKIPNNC). Serine 203, serine 206, serine 217, and serine 221 each carry phosphoserine. The Phorbol-ester/DAG-type 2 zinc-finger motif lies at 276 to 326 (PHTFVIHSYTRPTVCQFCKKLLKGLFRQGLQCKDCRFNCHKRCAPKVPNNC). 2 disordered regions span residues 338–362 (SPGA…NSGL) and 379–410 (AEGQ…SNNI). A compositionally biased stretch (acidic residues) spans 345-355 (VVMEEGSDDND). Serine 351 is modified (phosphoserine). Positions 400-410 (RTISPSTSNNI) are enriched in polar residues. 2 positions are modified to phosphoserine; by MAPK13: serine 403 and serine 407. Residues 428–547 (TVMKEGWMVH…WEVAIQHALM (120 aa)) enclose the PH domain. Tyrosine 438 carries the phosphotyrosine modification. Residue serine 454 is modified to Phosphoserine. At tyrosine 469 the chain carries Phosphotyrosine; by ABL. Residue tyrosine 508 is modified to Phosphotyrosine. Residue serine 554 is modified to Phosphoserine. Residues 589–845 (IFPDEVLGSG…VDKTLSHPWL (257 aa)) form the Protein kinase domain. ATP is bound by residues 595–603 (LGSGQFGIV) and lysine 618. Aspartate 712 (proton acceptor) is an active-site residue. A Phosphoserine; by PKC/PRKCD modification is found at serine 744. Phosphoserine; by autocatalysis and PKC/PRKCD is present on serine 748. Tyrosine 755 is subject to Phosphotyrosine. Serine 916 bears the Phosphoserine; by autocatalysis mark.

This sequence belongs to the protein kinase superfamily. CAMK Ser/Thr protein kinase family. PKD subfamily. Interacts (via N-terminus) with ADAP1/CENTA1. Interacts with MAPK13. Interacts with DAPK1 in an oxidative stress-regulated manner. Interacts with USP28; the interaction induces phosphorylation of USP28 and activated KRAS-mediated stabilization of ZNF304. Interacts with AKAP13 (via C-terminal domain). Requires Mg(2+) as cofactor. Phosphorylated at Ser-403 and Ser-407 by MAPK13 during regulation of insulin secretion in pancreatic beta cells. Phosphorylated by DAPK1. Phosphorylated at Tyr-93 and by ABL at Tyr-469, which primes the kinase in response to oxidative stress, and promotes a second step activating phosphorylation at Ser-744/Ser-748 by PKRD. Phosphorylated at Ser-916 upon S.enterica infection in macrophages.

It localises to the cytoplasm. It is found in the cell membrane. The protein localises to the golgi apparatus. Its subcellular location is the trans-Golgi network. It catalyses the reaction L-seryl-[protein] + ATP = O-phospho-L-seryl-[protein] + ADP + H(+). The enzyme catalyses L-threonyl-[protein] + ATP = O-phospho-L-threonyl-[protein] + ADP + H(+). Its activity is regulated as follows. Activated by DAG and phorbol esters. Phorbol-ester/DAG-type domain 1 binds DAG with high affinity and appears to play the dominant role in mediating translocation to the cell membrane and trans-Golgi network. Phorbol-ester/DAG-type domain 2 binds phorbol ester with higher affinity. Autophosphorylation of Ser-748 and phosphorylation of Ser-744 by PKC relieves auto-inhibition by the PH domain. Phosphorylation on Tyr-469 by the SRC-ABL1 pathway in response to oxidative stress, is also required for activation. Activated by DAPK1 under oxidative stress. Its function is as follows. Serine/threonine-protein kinase that converts transient diacylglycerol (DAG) signals into prolonged physiological effects downstream of PKC, and is involved in the regulation of MAPK8/JNK1 and Ras signaling, Golgi membrane integrity and trafficking, cell survival through NF-kappa-B activation, cell migration, cell differentiation by mediating HDAC7 nuclear export, cell proliferation via MAPK1/3 (ERK1/2) signaling, and plays a role in cardiac hypertrophy, VEGFA-induced angiogenesis, genotoxic-induced apoptosis and flagellin-stimulated inflammatory response. Phosphorylates the epidermal growth factor receptor (EGFR) on dual threonine residues, which leads to the suppression of epidermal growth factor (EGF)-induced MAPK8/JNK1 activation and subsequent JUN phosphorylation. Phosphorylates RIN1, inducing RIN1 binding to 14-3-3 proteins YWHAB, YWHAE and YWHAZ and increased competition with RAF1 for binding to GTP-bound form of Ras proteins (NRAS, HRAS and KRAS). Acts downstream of the heterotrimeric G-protein beta/gamma-subunit complex to maintain the structural integrity of the Golgi membranes, and is required for protein transport along the secretory pathway. In the trans-Golgi network (TGN), regulates the fission of transport vesicles that are on their way to the plasma membrane. May act by activating the lipid kinase phosphatidylinositol 4-kinase beta (PI4KB) at the TGN for the local synthesis of phosphorylated inositol lipids, which induces a sequential production of DAG, phosphatidic acid (PA) and lyso-PA (LPA) that are necessary for membrane fission and generation of specific transport carriers to the cell surface. Under oxidative stress, is phosphorylated at Tyr-469 via SRC-ABL1 and contributes to cell survival by activating IKK complex and subsequent nuclear translocation and activation of NFKB1. Involved in cell migration by regulating integrin alpha-5/beta-3 recycling and promoting its recruitment in newly forming focal adhesion. In osteoblast differentiation, mediates the bone morphogenetic protein 2 (BMP2)-induced nuclear export of HDAC7, which results in the inhibition of HDAC7 transcriptional repression of RUNX2. In neurons, plays an important role in neuronal polarity by regulating the biogenesis of TGN-derived dendritic vesicles, and is involved in the maintenance of dendritic arborization and Golgi structure in hippocampal cells. May potentiate mitogenesis induced by the neuropeptide bombesin or vasopressin by mediating an increase in the duration of MAPK1/3 (ERK1/2) signaling, which leads to accumulation of immediate-early gene products including FOS that stimulate cell cycle progression. Plays an important role in the proliferative response induced by low calcium in keratinocytes, through sustained activation of MAPK1/3 (ERK1/2) pathway. Downstream of novel PKC signaling, plays a role in cardiac hypertrophy by phosphorylating HDAC5, which in turn triggers XPO1/CRM1-dependent nuclear export of HDAC5, MEF2A transcriptional activation and induction of downstream target genes that promote myocyte hypertrophy and pathological cardiac remodeling. Mediates cardiac troponin I (TNNI3) phosphorylation at the PKA sites, which results in reduced myofilament calcium sensitivity, and accelerated crossbridge cycling kinetics. The PRKD1-HDAC5 pathway is also involved in angiogenesis by mediating VEGFA-induced specific subset of gene expression, cell migration, and tube formation. In response to VEGFA, is necessary and required for HDAC7 phosphorylation which induces HDAC7 nuclear export and endothelial cell proliferation and migration. During apoptosis induced by cytarabine and other genotoxic agents, PRKD1 is cleaved by caspase-3 at Asp-378, resulting in activation of its kinase function and increased sensitivity of cells to the cytotoxic effects of genotoxic agents. In epithelial cells, is required for transducing flagellin-stimulated inflammatory responses by binding and phosphorylating TLR5, which contributes to MAPK14/p38 activation and production of inflammatory cytokines. Acts as an activator of NLRP3 inflammasome assembly by mediating phosphorylation of NLRP3. May play a role in inflammatory response by mediating activation of NF-kappa-B. May be involved in pain transmission by directly modulating TRPV1 receptor. Plays a role in activated KRAS-mediated stabilization of ZNF304 in colorectal cancer (CRC) cells. Regulates nuclear translocation of transcription factor TFEB in macrophages upon live S.enterica infection. This is Serine/threonine-protein kinase D1 (Prkd1) from Mus musculus (Mouse).